Consider the following 919-residue polypeptide: Valine--tRNA ligase (919 aa).

Residues 46–56 carry the 'HIGH' region motif; sequence PNVTGTLHMGH. The 'KMSKS' region signature appears at 528 to 532; the sequence is KMSKS. An ATP-binding site is contributed by Lys531. The stretch at 849–919 forms a coiled coil; the sequence is LAGLVDIEAE…KTLEKKEALG (71 aa).

Belongs to the class-I aminoacyl-tRNA synthetase family. ValS type 1 subfamily. In terms of assembly, monomer.

The protein localises to the cytoplasm. The enzyme catalyses tRNA(Val) + L-valine + ATP = L-valyl-tRNA(Val) + AMP + diphosphate. Its function is as follows. Catalyzes the attachment of valine to tRNA(Val). As ValRS can inadvertently accommodate and process structurally similar amino acids such as threonine, to avoid such errors, it has a 'posttransfer' editing activity that hydrolyzes mischarged Thr-tRNA(Val) in a tRNA-dependent manner. The sequence is that of Valine--tRNA ligase from Francisella tularensis subsp. tularensis (strain SCHU S4 / Schu 4).